The chain runs to 1017 residues: Disease resistance protein RML1B (1017 aa).

Positions 12–176 (YKFNVFASFH…KIARDVLDKL (165 aa)) constitute a TIR domain. Glu-87 is a catalytic residue. One can recognise an NB-ARC domain in the interval 191 to 447 (EAHLREIKSL…HIAIFFNKED (257 aa)). LRR repeat units lie at residues 539 to 562 (ISRI…QFLK), 583 to 605 (PCLL…TFNP), 606 to 628 (EHLV…TQPL), 629 to 652 (KNLK…SNAT), 654 to 675 (LEYL…ISHL), 676 to 698 (HKLE…HMNL), 699 to 724 (ESLQ…NIRY), 738 to 760 (CPGL…THLP), 761 to 782 (TSLT…CFKS), and 784 to 809 (HQLK…SLLT).

The catalysed reaction is NAD(+) + H2O = ADP-D-ribose + nicotinamide + H(+). TIR-NB-LRR receptor-like protein that confers resistance to the pathogen Leptosphaeria maculans (blackleg disease). This is Disease resistance protein RML1B from Arabidopsis thaliana (Mouse-ear cress).